A 354-amino-acid polypeptide reads, in one-letter code: MKAARFYNKGDIRIEDIPEPTVAPGTVGINVAWCGICGTDLHEFMEGPIFIPPCGHPHPISGESAPVTMGHEFSGVVYAVGEGVDDIKVGQHVVVEPYIIRDDVPTGEGSNYHLSKDMNFIGLGGCGGGLSEKIAVKRRWVHPISDKIPLDQAALIEPLSVGHHAYVRSGAKAGDVALVGGAGPIGLLLAAVLKAKGIKVIITELSKARKDKARESGVADYILDPSEVDVVEEVKKLTNGEGVDVAFECTSVNKVLDTLVEACKPAANLVIVSIWSHPATVNVHSVVMKELDVRGTIAYCNDHAETIKLVEEGKINLEPFITQRIKLDKLVSEGFERLIHNNESAVKIIVNPNL.

Residues 10–350 (GDIRIEDIPE…NNESAVKIIV (341 aa)) form the Enoyl reductase (ER) domain. Residues Cys37, His71, and Glu157 each contribute to the Zn(2+) site.

Belongs to the zinc-containing alcohol dehydrogenase family. Zn(2+) serves as cofactor.

It carries out the reaction (R,R)-butane-2,3-diol + NAD(+) = (R)-acetoin + NADH + H(+). The enzyme catalyses (S)-acetoin + NAD(+) = diacetyl + NADH + H(+). In terms of biological role, NAD-dependent butanediol dehydrogenase which catalyzes the oxidation of (R,R)-butane-2,3-diol to (3R)-acetoin and of meso-butane-2,3-diol to (3S)-acetoin. Preferentially oxidizes (R,R)-butane-2,3-diol, with a catalytic efficiency approximately fourfold higher than with meso-butane-2,3-diol. Shows a very low activity with (S,S)-butane-2,3-diol. Can also catalyze the reduction of (3R/3S)-acetoin and diacetyl in the presence of NADH. The polypeptide is (R,R)-butanediol dehydrogenase (Neisseria gonorrhoeae (strain ATCC 700825 / FA 1090)).